The following is a 294-amino-acid chain: Mitochondrial glycine transporter (294 aa).

Solcar repeat units follow at residues 5–84, 102–186, and 208–292; these read RRAT…IRQA, LNMY…MKVL, and ASTL…IVKK. 6 consecutive transmembrane segments (helical) span residues 11–36, 59–85, 108–133, 161–184, 212–238, and 267–285; these read LIGGFSGGLVSAIILQPFDLLKTRLQ, GALPSCIRTSVGSAMYLTMLNSIRQAI, MFSGAVTRALTGLITMPITVIKVRYE, GFGATALRDAPYAGLYMLFYDRMK, INGSSAFSAAVIATSITAPFDTVKTRM, and GISLRLTRKAFSAGIAWGI.

This sequence belongs to the mitochondrial carrier (TC 2.A.29) family. SLC25A38 subfamily.

It is found in the mitochondrion inner membrane. The enzyme catalyses glycine(in) = glycine(out). Functionally, mitochondrial glycine transporter that imports glycine into the mitochondrial matrix. Plays an important role in providing glycine for the first enzymatic step in heme biosynthesis, the condensation of glycine with succinyl-CoA to produce 5-aminolevulinate (ALA) in the mitochondrial matrix. The chain is Mitochondrial glycine transporter from Kluyveromyces lactis (strain ATCC 8585 / CBS 2359 / DSM 70799 / NBRC 1267 / NRRL Y-1140 / WM37) (Yeast).